Consider the following 55-residue polypeptide: Large ribosomal subunit protein bL33 (55 aa).

This sequence belongs to the bacterial ribosomal protein bL33 family.

This Bartonella henselae (strain ATCC 49882 / DSM 28221 / CCUG 30454 / Houston 1) (Rochalimaea henselae) protein is Large ribosomal subunit protein bL33.